Here is a 137-residue protein sequence, read N- to C-terminus: Histone H2B.1, sperm (137 aa).

The segment at 1 to 43 is disordered; that stretch reads MPSQKSPTKRSPTKRSPQKGGKGAKRGGKAGKRRRGVAVKRRR. 3 short sequence motifs (SPKK motif) span residues 6-9, 11-14, and 16-19; these read SPTK and SPQK. Positions 7–43 are enriched in basic residues; the sequence is PTKRSPTKRSPQKGGKGAKRGGKAGKRRRGVAVKRRR. Phosphoserine is present on residues serine 11 and serine 16. Serine 124 carries O-linked (GlcNAc) serine glycosylation. Lysine 132 participates in a covalent cross-link: Glycyl lysine isopeptide (Lys-Gly) (interchain with G-Cter in ubiquitin).

The protein belongs to the histone H2B family. The nucleosome is a histone octamer containing two molecules each of H2A, H2B, H3 and H4 assembled in one H3-H4 heterotetramer and two H2A-H2B heterodimers. The octamer wraps approximately 147 bp of DNA. Monoubiquitination of Lys-132 gives a specific tag for epigenetic transcriptional activation and is also prerequisite for histone H3 'Lys-4' and 'Lys-79' methylation. In terms of processing, phosphorylated on SPKK motifs 2 and 3; which may regulate DNA binding. Dephosphorylated during maturation of spermatids to mature sperm and rephosphorylated at fertilization. Post-translationally, glcNAcylation at Ser-124 promotes monoubiquitination of Lys-132. It fluctuates in response to extracellular glucose, and associates with transcribed genes.

It is found in the nucleus. The protein localises to the chromosome. Its function is as follows. Core component of nucleosome. Nucleosomes wrap and compact DNA into chromatin, limiting DNA accessibility to the cellular machineries which require DNA as a template. Histones thereby play a central role in transcription regulation, DNA repair, DNA replication and chromosomal stability. DNA accessibility is regulated via a complex set of post-translational modifications of histones, also called histone code, and nucleosome remodeling. In Psammechinus miliaris (Green sea urchin), this protein is Histone H2B.1, sperm.